A 468-amino-acid polypeptide reads, in one-letter code: MSSGKIAQVVGPVVDVMFASGDKLPEINNALIVYKDSDKKQKIVLEVALELGDGMVRTIAMESTDGLTRGLEVLDTGRAISVPVGKETLGRVFNVLGETIDLEEPFAEDVDRQPIHKKAPSFDELSTSSEILETGIKVIDLLAPYLKGGKVGLFGGAGVGKTVLIQELIHNIAQEHGGISVFTGVGERTREGNDLYWEMKESGVIEKTAMVFGQMNEPPGARMRVALTGLTIAEYFRDVEGQDVLLFIDNIFRFTQAGSEVSALLGRMPSAVGYQPTLATEMGQLQERITSTQKGSVTSIQAIYVPADDYTDPAPATAFAHLDSTTNLERKLTQMGIYPAVDPLASSSRALSPEIVGEEHYAVATEVQRVLQRYRELQDIIAILGMDELSDEEKTLVGRARRIQFFLSQNFNVAEQFTGLPGSYVPVAETVRGFKEILEGKYDHLPEDAFRSVGPIEDVIKKAEKMGF.

155–162 (GGAGVGKT) serves as a coordination point for ATP.

Belongs to the ATPase alpha/beta chains family. F-type ATPases have 2 components, CF(1) - the catalytic core - and CF(0) - the membrane proton channel. CF(1) has five subunits: alpha(3), beta(3), gamma(1), delta(1), epsilon(1). CF(0) has three main subunits: a(1), b(2) and c(9-12). The alpha and beta chains form an alternating ring which encloses part of the gamma chain. CF(1) is attached to CF(0) by a central stalk formed by the gamma and epsilon chains, while a peripheral stalk is formed by the delta and b chains.

It is found in the cell membrane. It catalyses the reaction ATP + H2O + 4 H(+)(in) = ADP + phosphate + 5 H(+)(out). In terms of biological role, produces ATP from ADP in the presence of a proton gradient across the membrane. The catalytic sites are hosted primarily by the beta subunits. This is ATP synthase subunit beta from Streptococcus pyogenes serotype M6 (strain ATCC BAA-946 / MGAS10394).